Here is a 119-residue protein sequence, read N- to C-terminus: Hemerythrin subunit A (119 aa).

Residues H26, H55, E59, H74, H78, H107, and D112 each coordinate Fe cation.

It belongs to the hemerythrin family.

Functionally, hemerythrin is a respiratory protein in blood cells of certain marine worms. The oxygen-binding site in each chain contains two iron atoms. The chain is Hemerythrin subunit A from Sipunculus nudus (Sipunculan worm).